The primary structure comprises 191 residues: Peptidyl-tRNA hydrolase (191 aa).

Tyrosine 17 lines the tRNA pocket. Histidine 22 acts as the Proton acceptor in catalysis. The tRNA site is built by tyrosine 68, asparagine 70, and asparagine 116.

The protein belongs to the PTH family. Monomer.

The protein localises to the cytoplasm. It carries out the reaction an N-acyl-L-alpha-aminoacyl-tRNA + H2O = an N-acyl-L-amino acid + a tRNA + H(+). Its function is as follows. Hydrolyzes ribosome-free peptidyl-tRNAs (with 1 or more amino acids incorporated), which drop off the ribosome during protein synthesis, or as a result of ribosome stalling. In terms of biological role, catalyzes the release of premature peptidyl moieties from peptidyl-tRNA molecules trapped in stalled 50S ribosomal subunits, and thus maintains levels of free tRNAs and 50S ribosomes. This is Peptidyl-tRNA hydrolase from Mycobacterium marinum (strain ATCC BAA-535 / M).